A 199-amino-acid polypeptide reads, in one-letter code: Probable molybdenum cofactor guanylyltransferase (199 aa).

Residues 6–8 (LAG), lysine 18, aspartate 65, and aspartate 97 contribute to the GTP site. Aspartate 97 is a Mg(2+) binding site.

This sequence belongs to the MobA family. The cofactor is Mg(2+).

Its subcellular location is the cytoplasm. It catalyses the reaction Mo-molybdopterin + GTP + H(+) = Mo-molybdopterin guanine dinucleotide + diphosphate. Its function is as follows. Transfers a GMP moiety from GTP to Mo-molybdopterin (Mo-MPT) cofactor (Moco or molybdenum cofactor) to form Mo-molybdopterin guanine dinucleotide (Mo-MGD) cofactor. The sequence is that of Probable molybdenum cofactor guanylyltransferase from Staphylococcus aureus (strain Mu50 / ATCC 700699).